Consider the following 414-residue polypeptide: MSVTHIIGAGLAGLSAAVAITHAGGRVKIYEASAMAGGRARSYHDKKLGIEIDNGNHMLLSGNHSAKTYLKRIGAEHRFKSPKEAAFSFCDLSDKERFTIKLSNGPLPWWVLCAKSRVPHSKAKDYLALLSLLLADHNTKIGDLVPDNTALWRKLLDPFFVSVLNTPAREGAACLAAAVIRETLMKGGKACIPRIAYPNLASSFIDPALDYLKARGVEVDFRNRLRQIHFSGQDVASLEFAHQDVKLGKGDKVIIALPAWVVQSLIPDIETPDKYQAIINAHFLMKPTAAMPHIMGVVGGTADWIFTFENRISVTISAANHLLALEKEELVKRIWDDIQTVYAFKQDMPEWQVVTEKRATFEATVEQNNRRPPAVTAWNNLFLAGNWVRTGLPATIESAIRSGQTAADLALSHS.

The protein belongs to the HpnE family.

The enzyme catalyses squalene + FAD + H2O + H(+) = hydroxysqualene + FADH2. It participates in secondary metabolite biosynthesis; hopanoid biosynthesis. Its function is as follows. Involved in the biosynthesis of the hopanoid precursor squalene (SQ) from farnesyl diphosphate (FPP). Catalyzes the third (last) step, the reduction of hydroxysqualene (HSQ) to SQ. The sequence is that of Hydroxysqualene dehydroxylase from Zymomonas mobilis subsp. mobilis (strain ATCC 31821 / ZM4 / CP4).